A 185-amino-acid chain; its full sequence is Cuticle protein 18.6, isoform B (185 aa).

Tandem repeats lie at residues Ala-21–Ala-24, Ala-33–Val-36, Ala-41–Val-44, Ala-133–Val-136, Ala-139–Val-142, and Ala-150–Val-153. Residues His-64–Ala-134 form the Chitin-binding type R&amp;R domain.

Its function is as follows. Component of the cuticle of migratory locust which contains more than 100 different structural proteins. This Locusta migratoria (Migratory locust) protein is Cuticle protein 18.6, isoform B.